The chain runs to 273 residues: Secretory carrier-associated membrane protein 6 (273 aa).

Residues 1–69 (MHHDPNPFDE…MGDSKSKARE (69 aa)) are disordered. Over 1–131 (MHHDPNPFDE…LQKLQYLAFA (131 aa)) the chain is Cytoplasmic. Residues 20 to 30 (NGGGGGGGGGS) show a composition bias toward gly residues. Residues 68-94 (RELSSWETDLKRREADIKRREEALRNA) are a coiled coil. The next 4 membrane-spanning stretches (helical) occupy residues 132–152 (SWLG…VCWI), 159–179 (LFFL…LIWY), 194–214 (FGWF…AAIA), and 239–259 (IIGI…LLSI). The Cytoplasmic segment spans residues 260–273 (GVLQRVYMYFRGNK).

It belongs to the SCAMP family.

Its subcellular location is the cell membrane. It localises to the cytoplasmic vesicle. The protein resides in the secretory vesicle membrane. In terms of biological role, probably involved in membrane trafficking. This Oryza sativa subsp. japonica (Rice) protein is Secretory carrier-associated membrane protein 6 (SCAMP6).